We begin with the raw amino-acid sequence, 310 residues long: Bis(hydroxyethyl) terephthalate hydrolase (310 aa).

Residues 1–48 (MQQNPHTHAAPGAARPVLRGVRRRLAAVTAAVAAVLVLGTLTGPGAQA) constitute a signal peptide (tat-type signal). Residue Phe111 participates in bis(2-hydroxyethyl) terephthalate binding. Ser179 (nucleophile) is an active-site residue. Met180 and Trp204 together coordinate bis(2-hydroxyethyl) terephthalate. Residues Asp225 and His257 each act as charge relay system in the active site. Cys290 and Cys306 are joined by a disulfide.

The protein belongs to the AB hydrolase superfamily. Predicted to be exported by the Tat system. The position of the signal peptide cleavage has not been experimentally proven.

Its subcellular location is the secreted. It carries out the reaction bis(2-hydroxyethyl) terephthalate + H2O = 4-[(2-hydroxyethoxy)carbonyl]benzoate + ethylene glycol + H(+). Its function is as follows. Catalyzes the degradation of bis(hydroxyethyl) terephthalate (BHET), a derived-oligomer of the plastic poly(ethylene terephthalate) (PET), hydrolyzing BHET to mono(2-hydroxyethyl) terephthalate (MHET). Shows no activity against PET. In Streptomyces coelicolor (strain ATCC BAA-471 / A3(2) / M145), this protein is Bis(hydroxyethyl) terephthalate hydrolase.